A 270-amino-acid chain; its full sequence is Gap junction beta-3 protein (270 aa).

At 1 to 20 (MDWKKLQDLLSGVNQYSTAF) the chain is on the cytoplasmic side. Residues 21 to 40 (GRIWLSVVFVFRVLVYVVAA) traverse the membrane as a helical segment. The Extracellular portion of the chain corresponds to 41–75 (ERVWGDEQKDFDCNTRQPGCTNVCYDNFFPISNIR). A helical transmembrane segment spans residues 76 to 98 (LWALQLIFVTCPSMLVILHVAYR). Topologically, residues 99–126 (EERERKHRQKHGEHCAKLYSHPGKKHGG) are cytoplasmic. The chain crosses the membrane as a helical span at residues 127 to 149 (LWWTYLFSLIFKLIIELVFLYVL). The Extracellular portion of the chain corresponds to 150 to 188 (HTLWHGFTMPRLVQCASVVPCPNTVDCYIARPTEKKVFT). Residues 189 to 211 (YFMVGASAVCIILTICEICYLIF) form a helical membrane-spanning segment. Residues 212–270 (HRIMRGLSKDKSTKSISSPKSSSRASTCRCHHKLLESGDLEAVPADDKLQASAPSLTPI) lie on the Cytoplasmic side of the membrane.

The protein belongs to the connexin family. Beta-type (group I) subfamily. As to quaternary structure, a connexon is composed of a hexamer of connexins. Interacts with CNST.

The protein localises to the cell membrane. Its subcellular location is the cell junction. The protein resides in the gap junction. In terms of biological role, one gap junction consists of a cluster of closely packed pairs of transmembrane channels, the connexons, through which materials of low MW diffuse from one cell to a neighboring cell. This is Gap junction beta-3 protein (Gjb3) from Rattus norvegicus (Rat).